Here is a 241-residue protein sequence, read N- to C-terminus: DNA repair protein RecO (241 aa).

Belongs to the RecO family.

In terms of biological role, involved in DNA repair and RecF pathway recombination. In Azobacteroides pseudotrichonymphae genomovar. CFP2, this protein is DNA repair protein RecO.